Here is an 84-residue protein sequence, read N- to C-terminus: Large ribosomal subunit protein bL31B (84 aa).

The protein belongs to the bacterial ribosomal protein bL31 family. Type B subfamily. In terms of assembly, part of the 50S ribosomal subunit.

The protein is Large ribosomal subunit protein bL31B of Parabacteroides distasonis (strain ATCC 8503 / DSM 20701 / CIP 104284 / JCM 5825 / NCTC 11152).